Reading from the N-terminus, the 198-residue chain is Protein RD3-like (198 aa).

A coiled-coil region spans residues 28–57; the sequence is KTLLRELKWHLKERERLIQEIENEQKVKKT. The disordered stretch occupies residues 133–168; that stretch reads GSEQEDLEDSGSMDCSAPSVIQGDSSKRADKDEIPT. Residues 157–166 are compositionally biased toward basic and acidic residues; the sequence is SSKRADKDEI.

The sequence is that of Protein RD3-like (RD3L) from Homo sapiens (Human).